Here is a 299-residue protein sequence, read N- to C-terminus: MAEVIDGKSVAEDVVRTVKALTAELVAKGKAKPGLAVVIVGEDPASQVYVASKSRTAKECGFHSLQHTLPAETSEEALLKIIADLNADPAVNGILVQLPLPAHIDAGKIIQAIAPQKDVDGFHFINVGKLGTGELDTAFVPCTPAGSMLLIQRVRGKDLSGLNAVVVGRSNIVGKPMANLLLAANCTVTIAHSRTKDLPALARTADILVAAVGRPEMIKGDWVKPGATVIDVGINRIPAPEKGEGKSRLVGDVAYAEAARQAGAITPVPGGVGPMTIAMLMANTLASAYLAAGLKRPTF.

Residues 168 to 170 (GRS), Ser-193, and Ile-234 contribute to the NADP(+) site.

Belongs to the tetrahydrofolate dehydrogenase/cyclohydrolase family. In terms of assembly, homodimer.

It carries out the reaction (6R)-5,10-methylene-5,6,7,8-tetrahydrofolate + NADP(+) = (6R)-5,10-methenyltetrahydrofolate + NADPH. The catalysed reaction is (6R)-5,10-methenyltetrahydrofolate + H2O = (6R)-10-formyltetrahydrofolate + H(+). The protein operates within one-carbon metabolism; tetrahydrofolate interconversion. In terms of biological role, catalyzes the oxidation of 5,10-methylenetetrahydrofolate to 5,10-methenyltetrahydrofolate and then the hydrolysis of 5,10-methenyltetrahydrofolate to 10-formyltetrahydrofolate. The polypeptide is Bifunctional protein FolD 1 (Mesorhizobium japonicum (strain LMG 29417 / CECT 9101 / MAFF 303099) (Mesorhizobium loti (strain MAFF 303099))).